A 423-amino-acid polypeptide reads, in one-letter code: WD repeat and SOCS box-containing protein 1 (423 aa).

Residues 76–100 (DRSSGAGPRRLSRQNSEGSLLPGEP) form a disordered region. 5 WD repeats span residues 125 to 166 (SRCV…LLLN), 169 to 209 (DHTD…NMVK), 213 to 252 (GHQNWVYCSAFSPDSSVLCSVGAGKAVFLWDMDKYTLIRK), 255 to 294 (GHHNDVVCCEFSPDGALLATASYDTRVIVWDPHTATVLLE), and 310 to 347 (ANDRWVRSVAFCHDGRHIASVTDDRLVRFWSIDEKSPQ). Residues 373 to 423 (DGSVHFWASPRSIASLQHLCRMTLRRVMPTQQVYTLPIPFSMQDYLAYKTL) form the SOCS box domain.

As to quaternary structure, component of a probable ECS E3 ubiquitin-protein ligase complex that contains the Elongin BC complex.

Its pathway is protein modification; protein ubiquitination. Probable substrate-recognition component of a SCF-like ECS (Elongin-Cullin-SOCS-box protein) E3 ubiquitin-protein ligase complex which mediates the ubiquitination and subsequent proteasomal degradation of target proteins. In Danio rerio (Zebrafish), this protein is WD repeat and SOCS box-containing protein 1 (wsb1).